The following is a 308-amino-acid chain: uncharacterized protein (308 aa).

The S4 RNA-binding domain maps to 11–87 (KRLDSLLASL…LKLEVLFEDK (77 aa)). Asp-131 is an active-site residue.

The protein belongs to the pseudouridine synthase RluA family.

It carries out the reaction a uridine in RNA = a pseudouridine in RNA. This is an uncharacterized protein from Mycoplasma genitalium (strain ATCC 33530 / DSM 19775 / NCTC 10195 / G37) (Mycoplasmoides genitalium).